The following is a 261-amino-acid chain: tRNA pseudouridine synthase A (261 aa).

D55 serves as the catalytic Nucleophile. Substrate is bound at residue Y114.

Belongs to the tRNA pseudouridine synthase TruA family. As to quaternary structure, homodimer.

It catalyses the reaction uridine(38/39/40) in tRNA = pseudouridine(38/39/40) in tRNA. Functionally, formation of pseudouridine at positions 38, 39 and 40 in the anticodon stem and loop of transfer RNAs. The protein is tRNA pseudouridine synthase A of Paracoccus denitrificans (strain Pd 1222).